Here is a 57-residue protein sequence, read N- to C-terminus: Large ribosomal subunit protein bL32c (57 aa).

The protein belongs to the bacterial ribosomal protein bL32 family.

It localises to the plastid. The protein resides in the chloroplast. The protein is Large ribosomal subunit protein bL32c of Acorus calamus (Sweet flag).